The sequence spans 499 residues: Glucooligosaccharide oxidase (499 aa).

The N-terminal stretch at 1-25 (MVRIQELTAALSLASVVQASWIQKR) is a signal peptide. Residues Cys-31 and Cys-80 are joined by a disulfide bond. In terms of domain architecture, FAD-binding PCMH-type spans 58–230 (VDYDPAAIAI…SEFEFNTFEA (173 aa)). Positions 95–155 (HSYGSYGFGG…GNRALSHGTC (61 aa)) form a cross-link, 6-(S-cysteinyl)-8alpha-(pros-histidyl)-FAD (His-Cys). Residues Tyr-97, Thr-154, and Arg-270 each contribute to the substrate site. 2 N-linked (GlcNAc...) asparagine glycosylation sites follow: Asn-330 and Asn-366. Residues Gln-378 and Gln-409 each coordinate substrate. N-linked (GlcNAc...) asparagine glycosylation occurs at Asn-419. Tyr-454 is a binding site for substrate. Tyr-454 (proton acceptor) is an active-site residue.

This sequence belongs to the oxygen-dependent FAD-linked oxidoreductase family. The cofactor is FAD. Post-translationally, the FAD cofactor is bound via a bicovalent 6-S-cysteinyl, 8alpha-N1-histidyl FAD linkage.

The protein resides in the secreted. The catalysed reaction is beta-lactose + O2 = lactobiono-1,5-lactone + H2O2. The enzyme catalyses D-cellobiose + O2 = D-cellobiono-1,5-lactone + H2O2. It catalyses the reaction D-cellotriose + O2 = D-cellotriono-1,5-lactone + H2O2. It carries out the reaction D-cellotetraose + O2 = D-cellotetraono-1,5-lactone + H2O2. The catalysed reaction is D-cellopentaose + O2 = D-cellopentaono-1,5-lactone + H2O2. The enzyme catalyses D-cellohexaose + O2 = D-cellohexaono-1,5-lactone + H2O2. Catalyzes the selective oxidation of C1 hydroxyl moieties on mono- and disaccharides with concomitant reduction of molecular oxygen to hydrogen peroxide. This results in the formation of the corresponding lactones, which typically undergo spontaneous hydrolysis. Glucooligosaccharide oxidase is able to oxidize the monosaccharide D-glucose as well as the disaccharides maltose, cellobiose, and lactose. In addition, it shows high selectivity for cello- and maltooligosaccharides, indicating that glucooligosaccharide oxidase prefers oligosaccharides with a beta-D-glucosyl unit on the reducing end and additional sugar units linked by alpha- or beta-1,4 glucosidic bonds. The polypeptide is Glucooligosaccharide oxidase (gluO) (Sarocladium strictum (Black bundle disease fungus)).